A 296-amino-acid chain; its full sequence is Enoyl-CoA hydratase AFT3-1 (296 aa).

The Peroxisomal targeting signal type 1 signature appears at 294 to 296 (PKL).

This sequence belongs to the enoyl-CoA hydratase/isomerase family.

Its subcellular location is the peroxisome. The catalysed reaction is a (3S)-3-hydroxyacyl-CoA = a (2E)-enoyl-CoA + H2O. It carries out the reaction a 4-saturated-(3S)-3-hydroxyacyl-CoA = a (3E)-enoyl-CoA + H2O. It functions in the pathway mycotoxin biosynthesis. Its function is as follows. Enoyl-CoA hydratase; part of the gene clusters that mediate the biosynthesis of the host-selective toxins (HSTs) AF-toxins responsible for Alternaria black spot of strawberry disease by the strawberry pathotype. AF-toxin I and III are valine derivatives of 2,3-dyhydroxy-isovaleric acid and 2-hydroxy-isovaleric acid respectively, while AF II is an isoleucine derivative of 2-hydroxy-valeric acid. These derivatives are bound to a 9,10-epoxy-8-hydroxy-9-methyl-decatrienoic acid (EDA) moiety. On cellular level, AF-toxins affect plasma membrane of susceptible cells and cause a sudden increase in loss of K(+) after a few minutes of toxin treatment. The aldo-keto reductase AFTS1 catalyzes the conversion of 2-keto-isovaleric acid (2-KIV) to 2-hydroxy-isovaleric acid (2-HIV) by reduction of its ketone to an alcohol. The acyl-CoA ligase AFT1, the hydrolase AFT2 and the enoyl-CoA hydratases AFT3 and AFT6, but also the polyketide synthase AFT9, the acyl-CoA dehydrogenase AFT10, the cytochrome P450 monooxygenase AFT11 and the oxidoreductase AFT12 are all involved in the biosynthesis of the AK-, AF- and ACT-toxin common EDA structural moiety. The exact function of each enzyme, and of additional enzymes identified within the AF-toxin clusters have still to be determined. This Alternaria alternata (Alternaria rot fungus) protein is Enoyl-CoA hydratase AFT3-1 (AFT3-1).